The primary structure comprises 652 residues: Carboxypeptidase S1 homolog A (652 aa).

Residues 1–19 (MRLAASIAVALPVIGAASA) form the signal peptide. A disulfide bridge connects residues Cys-50 and Cys-121. 6 N-linked (GlcNAc...) asparagine glycosylation sites follow: Asn-77, Asn-132, Asn-161, Asn-168, Asn-184, and Asn-202. The active site involves Ser-238. Asn-260, Asn-299, Asn-347, and Asn-410 each carry an N-linked (GlcNAc...) asparagine glycan. 2 cysteine pairs are disulfide-bonded: Cys-325–Cys-361 and Cys-332–Cys-354. Residue Asp-458 is part of the active site. Cys-461 provides a ligand contact to substrate. N-linked (GlcNAc...) asparagine glycosylation is found at Asn-474, Asn-492, and Asn-505. His-516 is an active-site residue. Glu-517 is a substrate binding site. An N-linked (GlcNAc...) asparagine glycan is attached at Asn-594. The tract at residues 608 to 628 (AASKGNPPPTTTSSPTASPTA) is disordered. The segment covering 618 to 628 (TTSSPTASPTA) has biased composition (low complexity). Gly-629 is lipidated: GPI-anchor amidated glycine. A propeptide spans 630–652 (SAMLKAPVAMLAISALTVLAFYL) (removed in mature form).

The protein belongs to the peptidase S10 family.

It is found in the cell membrane. It catalyses the reaction Preferential release of a C-terminal arginine or lysine residue.. In terms of biological role, extracellular serine carboxypeptidase that contributes to pathogenicity. This Arthroderma benhamiae (strain ATCC MYA-4681 / CBS 112371) (Trichophyton mentagrophytes) protein is Carboxypeptidase S1 homolog A (SCPA).